We begin with the raw amino-acid sequence, 274 residues long: Diaminopimelate epimerase (274 aa).

Residues Asn-11, Gln-44, and Asn-64 each coordinate substrate. Residue Cys-73 is the Proton donor of the active site. Residues 74–75, Asn-157, Asn-190, and 208–209 each bind substrate; these read GN and ER. The active-site Proton acceptor is the Cys-217. 218 to 219 contributes to the substrate binding site; the sequence is GS.

Belongs to the diaminopimelate epimerase family. As to quaternary structure, homodimer.

Its subcellular location is the cytoplasm. The catalysed reaction is (2S,6S)-2,6-diaminopimelate = meso-2,6-diaminopimelate. The protein operates within amino-acid biosynthesis; L-lysine biosynthesis via DAP pathway; DL-2,6-diaminopimelate from LL-2,6-diaminopimelate: step 1/1. Catalyzes the stereoinversion of LL-2,6-diaminopimelate (L,L-DAP) to meso-diaminopimelate (meso-DAP), a precursor of L-lysine and an essential component of the bacterial peptidoglycan. This Glaesserella parasuis serovar 5 (strain SH0165) (Haemophilus parasuis) protein is Diaminopimelate epimerase.